We begin with the raw amino-acid sequence, 602 residues long: MVKNRNEIPEALTWDLTTIFSTDQKWETELEKVKKELSLVETNDKGHLLDSAETLLTITKNMLSISQKVEKLYVYASMKNDQDTREAKYQDYQSKATALYVNFGESYAFYEPEFLKNLQKETYGKWLETLQELKNYDHMFERLFAKKEHILSQKEGKILAAPGEIFESPSETFEIFDNADVKFPFVKNELGEKIQLTHGNYGSLMESENREVRKAAYEALYSNYEQCQHTYAKTLQTNVKVHNFNAQIRAYDSARQAALMSNFVPEKVYDVLIEGIHQHLPLLHRYIELRKKILEISDFKMYDIYTPLSNLDYKFNYTEGVKKAQEVLAIFGEEYSQKVKAAFDERWIDVEENVGKRSGAYSGGSYDTKAFMLLNWQGTLDDLFTLVHEMGHSIHSTFTRENQPYVYGDYPIFLAEIASTTNENILTETLLKESNDEKERFALLNHWLDSFRGTVFRQSQFAEFEQKIHEVDAEGEVLTSEFLNSLYGELNEKYYGLSAKENPEIQFEWAKIPHFYYNFYVFQYATGFSAASFIAEKVVHGSVTDRQNYLDYLKAGSSAYPLDVIAKAGVNMESTDYLESAFKLFEKRLNELEKLVEKGVHL.

His388 provides a ligand contact to Zn(2+). Residue Glu389 is part of the active site. Zn(2+)-binding residues include His392 and His395.

Belongs to the peptidase M3B family. The cofactor is Zn(2+).

Hydrolyzes peptides containing between 7 and 17 amino acids with a rather wide specificity. This Lactococcus lactis subsp. cremoris (Streptococcus cremoris) protein is Oligoendopeptidase F, chromosomal (pepF2).